The primary structure comprises 225 residues: Ribonuclease 3 (225 aa).

Residues 5–127 (IEKLTRQLGY…IIGAVYLDSD (123 aa)) enclose the RNase III domain. A Mg(2+)-binding site is contributed by Glu40. Asp44 is an active-site residue. Asp113 and Glu116 together coordinate Mg(2+). Residue Glu116 is part of the active site. One can recognise a DRBM domain in the interval 154-224 (DPKTRLQEFL…AELALEQLTN (71 aa)).

This sequence belongs to the ribonuclease III family. Homodimer. Mg(2+) is required as a cofactor.

The protein localises to the cytoplasm. The enzyme catalyses Endonucleolytic cleavage to 5'-phosphomonoester.. Digests double-stranded RNA. Involved in the processing of primary rRNA transcript to yield the immediate precursors to the large and small rRNAs (23S and 16S). Processes some mRNAs, and tRNAs when they are encoded in the rRNA operon. Processes pre-crRNA and tracrRNA of type II CRISPR loci if present in the organism. The chain is Ribonuclease 3 from Vibrio vulnificus (strain CMCP6).